Reading from the N-terminus, the 153-residue chain is D-aminoacyl-tRNA deacylase (153 aa).

The Gly-cisPro motif, important for rejection of L-amino acids signature appears at 137 to 138 (GP).

This sequence belongs to the DTD family. Homodimer.

The protein localises to the cytoplasm. It carries out the reaction glycyl-tRNA(Ala) + H2O = tRNA(Ala) + glycine + H(+). The catalysed reaction is a D-aminoacyl-tRNA + H2O = a tRNA + a D-alpha-amino acid + H(+). An aminoacyl-tRNA editing enzyme that deacylates mischarged D-aminoacyl-tRNAs. Also deacylates mischarged glycyl-tRNA(Ala), protecting cells against glycine mischarging by AlaRS. Acts via tRNA-based rather than protein-based catalysis; rejects L-amino acids rather than detecting D-amino acids in the active site. By recycling D-aminoacyl-tRNA to D-amino acids and free tRNA molecules, this enzyme counteracts the toxicity associated with the formation of D-aminoacyl-tRNA entities in vivo and helps enforce protein L-homochirality. This is D-aminoacyl-tRNA deacylase from Herpetosiphon aurantiacus (strain ATCC 23779 / DSM 785 / 114-95).